We begin with the raw amino-acid sequence, 186 residues long: Ribosome-recycling factor (186 aa).

This sequence belongs to the RRF family.

The protein resides in the cytoplasm. Responsible for the release of ribosomes from messenger RNA at the termination of protein biosynthesis. May increase the efficiency of translation by recycling ribosomes from one round of translation to another. The chain is Ribosome-recycling factor from Chlorobium luteolum (strain DSM 273 / BCRC 81028 / 2530) (Pelodictyon luteolum).